Consider the following 566-residue polypeptide: Proline--tRNA ligase (566 aa).

The protein belongs to the class-II aminoacyl-tRNA synthetase family. ProS type 1 subfamily. As to quaternary structure, homodimer.

The protein resides in the cytoplasm. The enzyme catalyses tRNA(Pro) + L-proline + ATP = L-prolyl-tRNA(Pro) + AMP + diphosphate. Its function is as follows. Catalyzes the attachment of proline to tRNA(Pro) in a two-step reaction: proline is first activated by ATP to form Pro-AMP and then transferred to the acceptor end of tRNA(Pro). As ProRS can inadvertently accommodate and process non-cognate amino acids such as alanine and cysteine, to avoid such errors it has two additional distinct editing activities against alanine. One activity is designated as 'pretransfer' editing and involves the tRNA(Pro)-independent hydrolysis of activated Ala-AMP. The other activity is designated 'posttransfer' editing and involves deacylation of mischarged Ala-tRNA(Pro). The misacylated Cys-tRNA(Pro) is not edited by ProRS. The protein is Proline--tRNA ligase of Campylobacter concisus (strain 13826).